An 81-amino-acid polypeptide reads, in one-letter code: Putative membrane protein insertion efficiency factor (81 aa).

This sequence belongs to the UPF0161 family.

The protein localises to the cell membrane. Functionally, could be involved in insertion of integral membrane proteins into the membrane. This is Putative membrane protein insertion efficiency factor from Geobacillus kaustophilus (strain HTA426).